The following is a 356-amino-acid chain: MGLDITQKKRRIALGCEGSANKLGIGVILHEGDTSTVLSNVRHTFVSPAGTGFLPKDTAQHHRAFFVRVAKQALSDAGIRIADIDCICYTRGPGMGGPLASVAVAARTLALLWGKELVGVNHCVGHIEMGRTITGADHPVVLYVSGGNTQVIAYAEQRYRIFGETLDIAVGNCLDRFARALNISNDPAPGYNIEVLARKGGRVLLDLPYAVKGMDCSFSGILTRAEELAAQMKANEGKGTDGEPFTGADLCFSLQETVFAMLVEITERAMAHVGSNQVLIVGGVGCNERLQEMMGLMAADRGGSVYATDERFCIDNGIMIAHAGLLAYETGFRTPIEESTCTQRFRTDEVLVKWRK.

Residues histidine 122, histidine 126, and tyrosine 143 each contribute to the a divalent metal cation site. Residues 143–147 (YVSGG), aspartate 175, glycine 190, glutamate 194, and asparagine 287 contribute to the substrate site. Residue aspartate 315 participates in a divalent metal cation binding.

This sequence belongs to the KAE1 / TsaD family. Component of the EKC/KEOPS complex composed of at least BUD32, CGI121, GON7, KAE1 and PCC1; the whole complex dimerizes. A divalent metal cation is required as a cofactor.

It localises to the cytoplasm. The protein localises to the nucleus. It catalyses the reaction L-threonylcarbamoyladenylate + adenosine(37) in tRNA = N(6)-L-threonylcarbamoyladenosine(37) in tRNA + AMP + H(+). Functionally, component of the EKC/KEOPS complex that is required for the formation of a threonylcarbamoyl group on adenosine at position 37 (t(6)A37) in tRNAs that read codons beginning with adenine. The complex is probably involved in the transfer of the threonylcarbamoyl moiety of threonylcarbamoyl-AMP (TC-AMP) to the N6 group of A37. KAE1 likely plays a direct catalytic role in this reaction, but requires other protein(s) of the complex to fulfill this activity. The EKC/KEOPS complex also promotes both telomere uncapping and telomere elongation. The complex is required for efficient recruitment of transcriptional coactivators. In Chaetomium globosum (strain ATCC 6205 / CBS 148.51 / DSM 1962 / NBRC 6347 / NRRL 1970) (Soil fungus), this protein is tRNA N6-adenosine threonylcarbamoyltransferase.